The chain runs to 334 residues: Immune-associated nucleotide-binding protein 3 (334 aa).

One can recognise an AIG1-type G domain in the interval 11 to 219; the sequence is KAVKNIVLVG…FRGKMYLEIK (209 aa). Residues 20 to 27 form a G1 region; it reads GRTGNGKS. GTP is bound by residues 20–28 and S41; that span reads GRTGNGKSA. The segment at 47 to 51 is G2; that stretch reads GVTKT. A G3 region spans residues 69-72; the sequence is DTPG. A G4 region spans residues 139–142; sequence TGGD. The interval 178–180 is G5; the sequence is NNM. N179 is a binding site for GTP. Residues 272 to 306 adopt a coiled-coil conformation; that stretch reads SAAHERMVSMLNENLENAHRENIDLRKAHDHEQKK.

It belongs to the TRAFAC class TrmE-Era-EngA-EngB-Septin-like GTPase superfamily. AIG1/Toc34/Toc159-like paraseptin GTPase family. IAN subfamily. As to expression, mostly expressed in pollen. Also detected in lateral roots and radicles.

The sequence is that of Immune-associated nucleotide-binding protein 3 from Arabidopsis thaliana (Mouse-ear cress).